Here is a 672-residue protein sequence, read N- to C-terminus: uncharacterized protein (672 aa).

A signal peptide spans 1–24 (MKTLKVLKIFIIVYISSVSLESFA). 2 helical membrane passes run 226–246 (IIGAALILYTMFFAFNMALNK) and 254–274 (ITLFIIKFLFVVYFSIGLGPL). The segment covering 363–372 (SNGTSGNNKP) has biased composition (polar residues). Residues 363–384 (SNGTSGNNKPIPNFDPDGKKDR) form a disordered region. 4 consecutive transmembrane segments (helical) span residues 410–430 (IILVAGMVFSVIFLSILLYFI), 436–456 (CMVTIYVMTYISPIFIPMVLF), 469–489 (VCISCALQPAVVAGFIALLIT), and 562–582 (VVSILAELLCVLIFSVIFYYF). Residues 628–646 (HGKSSLGDKPDIGNKRKDG) are compositionally biased toward basic and acidic residues. The tract at residues 628 to 672 (HGKSSLGDKPDIGNKRKDGAQQGEDAVNSSGGEVADLASGSGGGK) is disordered.

The protein belongs to the TrbL/VirB6 family.

It is found in the cell membrane. This is an uncharacterized protein from Rickettsia prowazekii (strain Madrid E).